The primary structure comprises 160 residues: Allophycocyanin alpha chain (160 aa).

Residue Asn70 is modified to N4-methylasparagine. Residue Cys80 participates in (2R,3E)-phycocyanobilin binding.

Belongs to the phycobiliprotein family. Component of the phycobilisome. Heterodimer of an alpha and a beta chain. In terms of processing, contains one covalently linked phycocyanobilin chromophore.

Its subcellular location is the cellular thylakoid membrane. Light-harvesting photosynthetic bile pigment-protein from the phycobiliprotein complex. Allophycocyanin has a maximum absorption at approximately 650 nanometers. The sequence is that of Allophycocyanin alpha chain (apcA) from Anabaena cylindrica.